Consider the following 238-residue polypeptide: MQLPALQSAKLIRRYKRFLADIELPTGDVMTIHCANTGAMTGCGEKGDTIWYSHSDSQTRKYPHSWELTQLANGQLCCINTHRSNQLVFEALQNKQIKELAMYDEIYPEVKYGEENSRIDFLLKGKGLPDCYVEVKSITLVKGNLGMFPDAVTTRGQKHVRELLAMKKQGHRAVVLFAGLHNGFDRFKIAEYIDPEYDRLLKEAMEQGVEAYAYAGQFEISNEIPTALSLTESVPYIK.

It belongs to the SfsA family.

The protein is Sugar fermentation stimulation protein homolog of Haemophilus influenzae (strain PittGG).